The sequence spans 206 residues: Ribonuclease HII (206 aa).

In terms of domain architecture, RNase H type-2 spans 19 to 206 (ALIAGVDEVG…GPVKRALGIE (188 aa)). A divalent metal cation contacts are provided by Asp-25, Glu-26, and Asp-117.

It belongs to the RNase HII family. Requires Mn(2+) as cofactor. It depends on Mg(2+) as a cofactor.

It localises to the cytoplasm. It catalyses the reaction Endonucleolytic cleavage to 5'-phosphomonoester.. Its function is as follows. Endonuclease that specifically degrades the RNA of RNA-DNA hybrids. The sequence is that of Ribonuclease HII from Vibrio cholerae serotype O1 (strain M66-2).